The primary structure comprises 218 residues: ATP synthase subunit a (218 aa).

5 consecutive transmembrane segments (helical) span residues 17 to 37 (IYST…GIFL), 75 to 95 (YLPL…SWFI), 104 to 124 (DLST…IFGI), 162 to 184 (LFGN…PFLL), and 196 to 216 (GTIQ…NFVH).

The protein belongs to the ATPase A chain family. In terms of assembly, F-type ATPases have 2 components, CF(1) - the catalytic core - and CF(0) - the membrane proton channel. CF(1) has five subunits: alpha(3), beta(3), gamma(1), delta(1), epsilon(1). CF(0) has three main subunits: a(1), b(2) and c(9-12). The alpha and beta chains form an alternating ring which encloses part of the gamma chain. CF(1) is attached to CF(0) by a central stalk formed by the gamma and epsilon chains, while a peripheral stalk is formed by the delta and b chains. In this bacterium the a and b subunits are transcribed but do not seem to be translated, thus the ATP synthase consists of the alpha, beta, gamma, delta, epsilon and c subunits.

The protein localises to the cell membrane. Its function is as follows. Key component of the proton channel; it plays a direct role in the translocation of protons across the membrane. This is ATP synthase subunit a from Moorella thermoacetica (strain ATCC 39073 / JCM 9320).